The primary structure comprises 662 residues: DNA ligase (662 aa).

Residues 31–35, 80–81, and glutamate 109 contribute to the NAD(+) site; these read DYEYD and SL. Catalysis depends on lysine 111, which acts as the N6-AMP-lysine intermediate. Arginine 132, glutamate 166, lysine 282, and lysine 306 together coordinate NAD(+). Positions 400, 403, 418, and 423 each coordinate Zn(2+). Residues 581–662 enclose the BRCT domain; that stretch reads KVSNIFEGKT…FEEMLKGENI (82 aa).

It belongs to the NAD-dependent DNA ligase family. LigA subfamily. The cofactor is Mg(2+). Requires Mn(2+) as cofactor.

The catalysed reaction is NAD(+) + (deoxyribonucleotide)n-3'-hydroxyl + 5'-phospho-(deoxyribonucleotide)m = (deoxyribonucleotide)n+m + AMP + beta-nicotinamide D-nucleotide.. DNA ligase that catalyzes the formation of phosphodiester linkages between 5'-phosphoryl and 3'-hydroxyl groups in double-stranded DNA using NAD as a coenzyme and as the energy source for the reaction. It is essential for DNA replication and repair of damaged DNA. This Thermoanaerobacter sp. (strain X514) protein is DNA ligase.